A 486-amino-acid chain; its full sequence is Vesicular GABA transporter (486 aa).

Over 1–93 (MASNRFQNLQ…EASEPISALQ (93 aa)) the chain is Cytoplasmic. A compositionally biased stretch (polar residues) spans 29–46 (LNEVPSYQNQPQTGESGS). A disordered region spans residues 29-85 (LNEVPSYQNQPQTGESGSNPPPHDRLEPIQESVVSEQPQKDDINKQEEAKDDGHGEA). Residues 66–85 (PQKDDINKQEEAKDDGHGEA) show a composition bias toward basic and acidic residues. Residues 94–114 (AAWNVTNAIQGMFIVGLPIAV) form a helical membrane-spanning segment. Over 115-119 (KVGGW) the chain is Lumenal, vesicle. Residues 120–140 (WSIGAMVGVAYVCYWTGVLLI) traverse the membrane as a helical segment. At 141-167 (ECLYENGVKKRKTYREIADFYKPGFGK) the chain is on the cytoplasmic side. A helical transmembrane segment spans residues 168–188 (WVLAAQLTELLSTCIIYLVLA). Over 189–203 (ADLLQSCFPSVDKAG) the chain is Lumenal, vesicle. A helical transmembrane segment spans residues 204-224 (WMMITSASLLTCSFLDDLQIV). Over 225–228 (SRLS) the chain is Cytoplasmic. A helical membrane pass occupies residues 229-249 (FFNAISHLIVNLIMVLYCLSF). Over 250 to 263 (VSQWSFSTITFSLN) the chain is Lumenal, vesicle. The chain crosses the membrane as a helical span at residues 264 to 284 (INTLPTIVGMVVFGYTSHIFL). Residues 285–305 (PNLEGNMKNPAQFNVMLKWSH) lie on the Cytoplasmic side of the membrane. A helical transmembrane segment spans residues 306–326 (IAAAVFKVVFGMLGFLTFGEL). At 327 to 341 (TQEEISNSLPNQSFK) the chain is on the lumenal, vesicle side. Residue Asn337 is glycosylated (N-linked (GlcNAc...) asparagine). The helical transmembrane segment at 342–362 (ILVNLILVVKALLSYPLPFYA) threads the bilayer. Over 363 to 398 (AVQLLKNNLFLGYPQTPFTSCYSPDKSLREWAVTLR) the chain is Cytoplasmic. The helical transmembrane segment at 399–419 (IILVLFTLFVALSVPYLVELM) threads the bilayer. The Lumenal, vesicle segment spans residues 420 to 421 (GL). Residues 422–442 (VGNITGTMLSFIWPALFHLYI) traverse the membrane as a helical segment. The Cytoplasmic portion of the chain corresponds to 443–457 (KEKTLNNFEKRFDQG). A helical membrane pass occupies residues 458 to 478 (IIIMGCSVCISGVYFSSMELL). The Lumenal, vesicle portion of the chain corresponds to 479-486 (RAINSADS).

This sequence belongs to the amino acid/polyamine transporter 2 family.

The protein resides in the cytoplasmic vesicle membrane. In terms of biological role, involved in the uptake of GABA into the synaptic vesicles. The chain is Vesicular GABA transporter (unc-47) from Caenorhabditis elegans.